We begin with the raw amino-acid sequence, 186 residues long: Phosphoheptose isomerase 1 (186 aa).

An SIS domain is found at 33–186 (LCECLKKGGK…TLCQIIDESF (154 aa)). 48–50 (NGG) contacts substrate. Histidine 57 and glutamate 61 together coordinate Zn(2+). Substrate is bound by residues glutamate 61, 90 to 91 (ND), 116 to 118 (STS), serine 121, and glutamine 168. Zn(2+) contacts are provided by glutamine 168 and histidine 176.

The protein belongs to the SIS family. GmhA subfamily. Homotetramer. Zn(2+) is required as a cofactor.

The protein localises to the cytoplasm. It carries out the reaction 2 D-sedoheptulose 7-phosphate = D-glycero-alpha-D-manno-heptose 7-phosphate + D-glycero-beta-D-manno-heptose 7-phosphate. The protein operates within carbohydrate biosynthesis; D-glycero-D-manno-heptose 7-phosphate biosynthesis; D-glycero-alpha-D-manno-heptose 7-phosphate and D-glycero-beta-D-manno-heptose 7-phosphate from sedoheptulose 7-phosphate: step 1/1. Its pathway is bacterial outer membrane biogenesis; LOS core biosynthesis. Functionally, catalyzes the isomerization of sedoheptulose 7-phosphate in D-glycero-D-manno-heptose 7-phosphate. This is Phosphoheptose isomerase 1 (gmhA1) from Campylobacter jejuni subsp. jejuni serotype O:2 (strain ATCC 700819 / NCTC 11168).